The chain runs to 439 residues: GTPase Der (439 aa).

2 EngA-type G domains span residues 4–166 and 175–350; these read PIVA…PAQD and IRIA…EEAS. GTP-binding positions include 10–17, 57–61, 119–122, 181–188, 228–232, and 293–296; these read GRPNVGKS, DTGGL, NKVE, DTAGM, and NKWD. The KH-like domain maps to 351–435; sequence KRVATADLNN…PIRFFLRKRE (85 aa).

Belongs to the TRAFAC class TrmE-Era-EngA-EngB-Septin-like GTPase superfamily. EngA (Der) GTPase family. In terms of assembly, associates with the 50S ribosomal subunit.

In terms of biological role, GTPase that plays an essential role in the late steps of ribosome biogenesis. The protein is GTPase Der of Desulforamulus reducens (strain ATCC BAA-1160 / DSM 100696 / MI-1) (Desulfotomaculum reducens).